Reading from the N-terminus, the 653-residue chain is Beta-galactosidase (653 aa).

The first 22 residues, 1 to 22 (MPGVVRLLALLLVPLLLGSARG), serve as a signal peptide directing secretion. The propeptide occupies 23 to 27 (LHNAT). N-linked (GlcNAc...) asparagine glycosylation occurs at Asn-25. Tyr-82 is a substrate binding site. Residue Asn-96 is glycosylated (N-linked (GlcNAc...) asparagine). Substrate is bound by residues Glu-128 and Asn-186. Glu-187 (proton donor) is an active-site residue. A disulfide bridge links Cys-194 with Cys-229. An N-linked (GlcNAc...) asparagine glycan is attached at Asn-246. Glu-267 serves as the catalytic Nucleophile. A substrate-binding site is contributed by Tyr-332. Asn-463, Asn-497, and Asn-554 each carry an N-linked (GlcNAc...) asparagine glycan. Cys-625 and Cys-633 are joined by a disulfide.

The protein belongs to the glycosyl hydrolase 35 family. In terms of assembly, homodimer. May form higher multimers.

Its subcellular location is the lysosome. It carries out the reaction Hydrolysis of terminal non-reducing beta-D-galactose residues in beta-D-galactosides.. In terms of biological role, cleaves beta-linked terminal galactosyl residues from gangliosides, glycoproteins, and glycosaminoglycans. The polypeptide is Beta-galactosidase (GLB1) (Bos taurus (Bovine)).